Consider the following 102-residue polypeptide: NADH-quinone oxidoreductase subunit K (102 aa).

3 consecutive transmembrane segments (helical) span residues 6-26, 30-50, and 63-83; these read LIGM…GVLA, ILFQ…AFVA, and MLIL…ALLL.

Belongs to the complex I subunit 4L family. As to quaternary structure, NDH-1 is composed of 14 different subunits. Subunits NuoA, H, J, K, L, M, N constitute the membrane sector of the complex.

The protein localises to the cell inner membrane. The catalysed reaction is a quinone + NADH + 5 H(+)(in) = a quinol + NAD(+) + 4 H(+)(out). Its function is as follows. NDH-1 shuttles electrons from NADH, via FMN and iron-sulfur (Fe-S) centers, to quinones in the respiratory chain. The immediate electron acceptor for the enzyme in this species is believed to be ubiquinone. Couples the redox reaction to proton translocation (for every two electrons transferred, four hydrogen ions are translocated across the cytoplasmic membrane), and thus conserves the redox energy in a proton gradient. The protein is NADH-quinone oxidoreductase subunit K of Rhodopseudomonas palustris (strain HaA2).